The following is a 1027-amino-acid chain: Sodium/potassium-transporting ATPase subunit alpha-1 (1027 aa).

Positions M1–D5 are excised as a propeptide. Basic and acidic residues predominate over residues M1 to Y10. The tract at residues M1–K39 is disordered. At G6 to P90 the chain is on the cytoplasmic side. Position 16 is a phosphoserine; by PKC (S16). A compositionally biased stretch (basic and acidic residues) spans E29 to K39. The tract at residues P85 to P87 is interaction with phosphoinositide-3 kinase. A helical transmembrane segment spans residues E91–A111. Topologically, residues V112 to Y134 are extracellular. A helical transmembrane segment spans residues L135–A155. The Cytoplasmic portion of the chain corresponds to K156–I291. Residues D217–N238 form a disordered region. The chain crosses the membrane as a helical span at residues E292–L311. Over L312–A323 the chain is Extracellular. The helical transmembrane segment at V324–A341 threads the bilayer. The Cytoplasmic portion of the chain corresponds to T342–L776. Catalysis depends on D379, which acts as the 4-aspartylphosphate intermediate. K490 contacts ATP. Mg(2+) is bound by residues D721 and D725. The chain crosses the membrane as a helical span at residues K777–F796. Residues F797–L806 lie on the Extracellular side of the membrane. A helical membrane pass occupies residues G807–A827. Residues Y828–K847 lie on the Cytoplasmic side of the membrane. A helical membrane pass occupies residues L848–F870. Topologically, residues F871 to C922 are extracellular. The chain crosses the membrane as a helical span at residues H923 to K942. The Cytoplasmic portion of the chain corresponds to T943 to N955. Residue S947 is modified to Phosphoserine; by PKA. A helical transmembrane segment spans residues K956 to Y974. The Extracellular portion of the chain corresponds to C975 to P989. A helical membrane pass occupies residues N990–K1010. Over L1011–Y1027 the chain is Cytoplasmic.

This sequence belongs to the cation transport ATPase (P-type) (TC 3.A.3) family. Type IIC subfamily. In terms of assembly, the sodium/potassium-transporting ATPase is composed of a catalytic alpha subunit, an auxiliary non-catalytic beta subunit and an additional regulatory subunit.

It is found in the cell membrane. The protein localises to the sarcolemma. It carries out the reaction K(+)(out) + Na(+)(in) + ATP + H2O = K(+)(in) + Na(+)(out) + ADP + phosphate + H(+). Its function is as follows. This is the catalytic component of the active enzyme, which catalyzes the hydrolysis of ATP coupled with the exchange of sodium and potassium ions across the plasma membrane. This action creates the electrochemical gradient of sodium and potassium ions, providing the energy for active transport of various nutrients. The polypeptide is Sodium/potassium-transporting ATPase subunit alpha-1 (atp1a1) (Catostomus commersonii (White sucker)).